Reading from the N-terminus, the 270-residue chain is Putative pyruvate, phosphate dikinase regulatory protein (270 aa).

ADP is bound at residue 151–158 (GVSRTSKT).

It belongs to the pyruvate, phosphate/water dikinase regulatory protein family. PDRP subfamily.

The catalysed reaction is N(tele)-phospho-L-histidyl/L-threonyl-[pyruvate, phosphate dikinase] + ADP = N(tele)-phospho-L-histidyl/O-phospho-L-threonyl-[pyruvate, phosphate dikinase] + AMP + H(+). It catalyses the reaction N(tele)-phospho-L-histidyl/O-phospho-L-threonyl-[pyruvate, phosphate dikinase] + phosphate + H(+) = N(tele)-phospho-L-histidyl/L-threonyl-[pyruvate, phosphate dikinase] + diphosphate. Its function is as follows. Bifunctional serine/threonine kinase and phosphorylase involved in the regulation of the pyruvate, phosphate dikinase (PPDK) by catalyzing its phosphorylation/dephosphorylation. The protein is Putative pyruvate, phosphate dikinase regulatory protein of Streptococcus gordonii (strain Challis / ATCC 35105 / BCRC 15272 / CH1 / DL1 / V288).